An 83-amino-acid polypeptide reads, in one-letter code: MSSGGLLLLLGLLTLWEVLTPVSSKDRPDFCELPADTGPCRVGFPSFYYNPDEKKCLEFIYGGCEGNANNFITKEECESTCAA.

A signal peptide spans methionine 1 to serine 24. Positions cysteine 31–cysteine 81 constitute a BPTI/Kunitz inhibitor domain. Cystine bridges form between cysteine 31–cysteine 81, cysteine 40–cysteine 64, and cysteine 56–cysteine 77.

The protein belongs to the venom Kunitz-type family. In terms of tissue distribution, expressed by the venom gland.

Its subcellular location is the secreted. Its function is as follows. Serine protease inhibitor. The sequence is that of Kunitz-type serine protease inhibitor microlepidin-2 from Oxyuranus microlepidotus (Inland taipan).